The following is a 72-amino-acid chain: Large ribosomal subunit protein uL29 (72 aa).

It belongs to the universal ribosomal protein uL29 family.

The sequence is that of Large ribosomal subunit protein uL29 (rpmC) from Chlamydia pneumoniae (Chlamydophila pneumoniae).